The following is a 248-amino-acid chain: tRNA uridine(34) hydroxylase (248 aa).

In terms of domain architecture, Rhodanese spans 127-221 (RGRPLVLLDT…YFEEVGGEGY (95 aa)). Cys-181 serves as the catalytic Cysteine persulfide intermediate.

It belongs to the TrhO family.

It carries out the reaction uridine(34) in tRNA + AH2 + O2 = 5-hydroxyuridine(34) in tRNA + A + H2O. Functionally, catalyzes oxygen-dependent 5-hydroxyuridine (ho5U) modification at position 34 in tRNAs. The protein is tRNA uridine(34) hydroxylase of Xanthomonas axonopodis pv. citri (strain 306).